The primary structure comprises 518 residues: DNA-binding protein Ikaros (518 aa).

The segment at 1 to 51 (METDEAQDMSQVSGKESPPISDVPDDADEPMPVPEDLSTTTGGQQSVKNER) is disordered. The span at 37–47 (LSTTTGGQQSV) shows a compositional bias: polar residues. C2H2-type zinc fingers lie at residues 117–139 (LKCD…NRSH), 145–167 (FQCN…IKLH), 173–195 (FKCH…LRTH), and 201–224 (HKCG…ERCH). The segment at 381–405 (SVSSERDASPSNSCQDSTDTESNNE) is disordered. C2H2-type zinc fingers lie at residues 461 to 483 (YKCE…MGCH) and 489 to 513 (FECN…RGEH).

This sequence belongs to the Ikaros C2H2-type zinc-finger protein family. In terms of tissue distribution, expressed in embryonic hematopoietic organs such as the bursa of Fabricius, thymus and spleen. In the adult, expressed in spleen, thymus, bursa and peripheral blood leukocytes.

It localises to the nucleus. Its function is as follows. Binds and activates the enhancer (delta-A element) of the CD3-delta gene. Functions in the specification and the maturation of the T-lymphocyte. Also interacts with a critical control element in the TDT (terminal deoxynucleotidyltransferase) promoter as well as with the promoters for other genes expressed during early stages of B- and T-cell development. Function is isoform-specific and is modulated by dominant-negative inactive isoforms. The protein is DNA-binding protein Ikaros (IKZF1) of Gallus gallus (Chicken).